A 253-amino-acid chain; its full sequence is uncharacterized protein (253 aa).

Belongs to the A.longa ORF167/ORF288 family.

The protein resides in the plastid. This is an uncharacterized protein from Euglena longa (Euglenophycean alga).